Here is a 167-residue protein sequence, read N- to C-terminus: Phosphopantetheine adenylyltransferase (167 aa).

Ser-10 serves as a coordination point for substrate. Residues 10 to 11 (SF) and His-18 each bind ATP. Substrate-binding residues include Lys-42, Ala-79, and Arg-93. ATP-binding positions include 94–96 (GLR), Glu-104, and 129–135 (VRHITAT).

It belongs to the bacterial CoaD family. As to quaternary structure, homohexamer. Mg(2+) serves as cofactor.

The protein localises to the cytoplasm. It catalyses the reaction (R)-4'-phosphopantetheine + ATP + H(+) = 3'-dephospho-CoA + diphosphate. It participates in cofactor biosynthesis; coenzyme A biosynthesis; CoA from (R)-pantothenate: step 4/5. Its function is as follows. Reversibly transfers an adenylyl group from ATP to 4'-phosphopantetheine, yielding dephospho-CoA (dPCoA) and pyrophosphate. This chain is Phosphopantetheine adenylyltransferase, found in Beijerinckia indica subsp. indica (strain ATCC 9039 / DSM 1715 / NCIMB 8712).